The sequence spans 141 residues: Hemoglobin subunit alpha-D (141 aa).

Residues 1-141 (MLSADEKQLI…VSDVLAEKYR (141 aa)) enclose the Globin domain. Positions 58 and 87 each coordinate heme b.

The protein belongs to the globin family. As to quaternary structure, heterotetramer of two alpha-D chains and two beta chains. In terms of tissue distribution, red blood cells.

Its function is as follows. Involved in oxygen transport from the lung to the various peripheral tissues. The chain is Hemoglobin subunit alpha-D (HBAD) from Phrynops hilarii (Snake-necked turtle).